We begin with the raw amino-acid sequence, 160 residues long: Small ribosomal subunit protein uS17m (160 aa).

The protein belongs to the universal ribosomal protein uS17 family. Component of the mitochondrial ribosome small subunit (28S) which comprises a 12S rRNA and about 30 distinct proteins.

It is found in the mitochondrion. The protein is Small ribosomal subunit protein uS17m (mrps-17) of Caenorhabditis elegans.